The chain runs to 269 residues: Signal recognition particle SEC65 subunit (269 aa).

Disordered regions lie at residues 30–65 and 236–269; these read RTPIAPVQPGPQITRSQDQEPPLFPNFPHPEQDKSV and PMTKSIYDPEPEQPQVKAPQAPKQPKKKVMKIRG. A compositionally biased stretch (low complexity) spans 248–258; it reads QPQVKAPQAPK. Residues 259 to 269 are compositionally biased toward basic residues; sequence QPKKKVMKIRG.

It belongs to the SRP19 family. As to quaternary structure, fungal signal recognition particle consists of a 7S RNA molecule (scR1) and at least six protein subunits: SRP72, SRP68, SRP54, SEC65, SRP21 andSRP14.

It localises to the cytoplasm. Functionally, signal-recognition-particle assembly has a crucial role in targeting secretory proteins to the rough endoplasmic reticulum membrane. It must be involved intimately in the translocation of a wide variety of protein substrates. This is Signal recognition particle SEC65 subunit (SEC65) from Debaryomyces hansenii (strain ATCC 36239 / CBS 767 / BCRC 21394 / JCM 1990 / NBRC 0083 / IGC 2968) (Yeast).